The chain runs to 1467 residues: Helicase ARIP4 (1467 aa).

2 disordered regions span residues 1 to 150 (MSDE…YAAP) and 186 to 234 (DSSS…GGTH). A compositionally biased stretch (acidic residues) spans 11–49 (PDLDPDVELEDAEEEEEEEEVAVEECDRDDEEDLLDDPS). A compositionally biased stretch (low complexity) spans 72 to 82 (TSTTSSQSEPS). A compositionally biased stretch (basic residues) spans 100–115 (KKRAQKPSHMRRNIRK). Glycyl lysine isopeptide (Lys-Gly) (interchain with G-Cter in SUMO2) cross-links involve residues Lys115 and Lys127. 2 stretches are compositionally biased toward basic and acidic residues: residues 133-147 (ELER…RKDY) and 192-201 (EDEKSSRDEV). Residue Lys272 forms a Glycyl lysine isopeptide (Lys-Gly) (interchain with G-Cter in SUMO2) linkage. Residues 292 to 512 (RFKTSSGFGC…WCMVDFVRPD (221 aa)) enclose the Helicase ATP-binding domain. 305–312 (HSMGLGKT) lines the ATP pocket. The DEAH box signature appears at 463–466 (DEGH). Positions 551-555 (LHSLL) match the LXXLL motif 1 motif. Positions 649-673 (GSAGTSARCPPQGTKGKGEDSTLAS) are disordered. Glycyl lysine isopeptide (Lys-Gly) (interchain with G-Cter in SUMO2) cross-links involve residues Lys665, Lys682, Lys759, Lys901, Lys1014, and Lys1018. The 169-residue stretch at 728–896 (HLIEESVKLG…RVVDDLNPML (169 aa)) folds into the Helicase C-terminal domain. Residues 1120-1171 (RATGKPKVPEDGRMAASGSQGPSCESTSNGRHSASSPKAPDPEGLARPVSPD) form a disordered region. The span at 1136-1155 (SGSQGPSCESTSNGRHSASS) shows a compositional bias: polar residues. Phosphoserine occurs at positions 1169 and 1172. Disordered stretches follow at residues 1184–1221 (DVAA…TALG) and 1247–1284 (PVLD…VQPY). Thr1260 carries the post-translational modification Phosphothreonine. The LXXLL motif 2 signature appears at 1329-1333 (LSNLL). Residues 1445 to 1467 (AEVGFSSNDDEDKDDDVIEVTGK) are disordered. Positions 1452–1467 (NDDEDKDDDVIEVTGK) are enriched in acidic residues.

It belongs to the SNF2/RAD54 helicase family. In terms of assembly, interacts with AR via its N-terminus. Interacts with DYRK1A. Binds DNA and mononucleosomes, but does not seem to form large multiprotein complexes. Post-translationally, sumoylated.

The protein localises to the nucleus. It catalyses the reaction ATP + H2O = ADP + phosphate + H(+). With respect to regulation, enzyme activity is enhanced by dsDNA (double-stranded DNA) and ssDNA (single-stranded DNA). Its function is as follows. DNA helicase that modulates androgen receptor (AR)-dependent transactivation in a promoter-dependent manner. Not able to remodel mononucleosomes in vitro. The protein is Helicase ARIP4 (RAD54L2) of Homo sapiens (Human).